A 474-amino-acid chain; its full sequence is MVETTNKGYVCQIIGPVLDIEFPGGKLPPIYSAIKIETADGIGNIVEVQQLLGDNKVRAVSMRSTDGLKRGVEAVDLGAPITVPVGVPTLGRIFNVIGEPVDEQGDVVVDQTLPIHRDAPAFTELETKPSIFETGIKVVDLLAPYRRGGKIGLFGGAGVGKTVLIMELINNIAKAHGGVSVFGGVGERTREGNDLYEEMKESGVINSSNFAESKVALVYGQMNEPPGARMRVGLTALTMAEYFRDVNKQDVLLFIDNIFRFTQAGSEVSALLGRMPSAVGYQPTLATEMGALQERITSTTQGSITSIQAVYVPADDLTDPAPATTFAHLDATTVLSRNLAAKGIYPAVDPLDSTSTMLQPGIVSEVHYETAETVKETLQRYKELQDIIAILGIDELSEEDRLVVARARKVERFLSQPFFVAEIFTGSPGKYVSLEETIKGFTMILNGELDDLPEQSFYLVGNIDEAIAKAETLK.

155–162 (GGAGVGKT) contacts ATP.

It belongs to the ATPase alpha/beta chains family. F-type ATPases have 2 components, CF(1) - the catalytic core - and CF(0) - the membrane proton channel. CF(1) has five subunits: alpha(3), beta(3), gamma(1), delta(1), epsilon(1). CF(0) has four main subunits: a(1), b(1), b'(1) and c(9-12).

The protein localises to the plastid. It localises to the chloroplast thylakoid membrane. The catalysed reaction is ATP + H2O + 4 H(+)(in) = ADP + phosphate + 5 H(+)(out). Its function is as follows. Produces ATP from ADP in the presence of a proton gradient across the membrane. The catalytic sites are hosted primarily by the beta subunits. The chain is ATP synthase subunit beta, chloroplastic from Thalassiosira pseudonana (Marine diatom).